Reading from the N-terminus, the 396-residue chain is MEYNVVLVRYSEIAVKGGYTRSRMERLLLRALEESLAAAGVEAEVERLQGRVLVRLRSPGDAAAAARASARVFGVKSVSPAVEVEYSGIEDLAEKAAEFFGERVRGRVFRVRARRSGVEGFTSKDVERLLGKLLLERGAGGVDLEKPEYTAYVEVRGRRAYFFDTINPGPGGLPVGSEEPSLALYSGGFDSGVAAWMIMRRGSPVHLAFYDFGVPEALEVAVEGAKTLAGEWAWGYRPRLYVVNFRGAALIVNGLVKPSYRTLVLRRLMLLHAQDLAAREGFEALVTGESVGQVASQTVRNLRLISSGLELPVLRPLAGMDKDEIVEKSREIGLYDIARRQVEVCGVDQPPNPRASPQGFRSEFEKVRDIFIPPPRVFDLKGESLHSILKTLGLRG.

The THUMP domain maps to 63–166 (AAAARASARV…GRRAYFFDTI (104 aa)). ATP is bound by residues 184–185 (LY), arginine 266, glycine 288, and glutamine 297.

It belongs to the ThiI family.

The protein localises to the cytoplasm. The catalysed reaction is [ThiI sulfur-carrier protein]-S-sulfanyl-L-cysteine + a uridine in tRNA + 2 reduced [2Fe-2S]-[ferredoxin] + ATP + H(+) = [ThiI sulfur-carrier protein]-L-cysteine + a 4-thiouridine in tRNA + 2 oxidized [2Fe-2S]-[ferredoxin] + AMP + diphosphate. The enzyme catalyses [ThiS sulfur-carrier protein]-C-terminal Gly-Gly-AMP + S-sulfanyl-L-cysteinyl-[cysteine desulfurase] + AH2 = [ThiS sulfur-carrier protein]-C-terminal-Gly-aminoethanethioate + L-cysteinyl-[cysteine desulfurase] + A + AMP + 2 H(+). The protein operates within cofactor biosynthesis; thiamine diphosphate biosynthesis. Catalyzes the ATP-dependent transfer of a sulfur to tRNA to produce 4-thiouridine in position 8 of tRNAs, which functions as a near-UV photosensor. Also catalyzes the transfer of sulfur to the sulfur carrier protein ThiS, forming ThiS-thiocarboxylate. This is a step in the synthesis of thiazole, in the thiamine biosynthesis pathway. The sulfur is donated as persulfide by IscS. The sequence is that of Probable tRNA sulfurtransferase from Aeropyrum pernix (strain ATCC 700893 / DSM 11879 / JCM 9820 / NBRC 100138 / K1).